The primary structure comprises 448 residues: Homogentisate 1,2-dioxygenase (448 aa).

Histidine 303 functions as the Proton acceptor in the catalytic mechanism. Fe cation is bound by residues histidine 346 and glutamate 352. The homogentisate site is built by tyrosine 361 and histidine 382. Histidine 382 is a Fe cation binding site.

Belongs to the homogentisate dioxygenase family. Hexamer; dimer of trimers. It depends on Fe cation as a cofactor.

The enzyme catalyses homogentisate + O2 = 4-maleylacetoacetate + H(+). Its pathway is amino-acid degradation; L-phenylalanine degradation; acetoacetate and fumarate from L-phenylalanine: step 4/6. Involved in the catabolism of homogentisate (2,5-dihydroxyphenylacetate or 2,5-OH-PhAc), a central intermediate in the degradation of phenylalanine and tyrosine. Catalyzes the oxidative ring cleavage of the aromatic ring of homogentisate to yield maleylacetoacetate. The polypeptide is Homogentisate 1,2-dioxygenase (Rhodopseudomonas palustris (strain ATCC BAA-98 / CGA009)).